Here is a 353-residue protein sequence, read N- to C-terminus: Ferredoxin--NADP reductase (353 aa).

FAD-binding residues include T25, E44, Q52, Y57, V97, F132, D298, and S339.

This sequence belongs to the ferredoxin--NADP reductase type 2 family. As to quaternary structure, homodimer. Requires FAD as cofactor.

It catalyses the reaction 2 reduced [2Fe-2S]-[ferredoxin] + NADP(+) + H(+) = 2 oxidized [2Fe-2S]-[ferredoxin] + NADPH. The protein is Ferredoxin--NADP reductase of Chlorobium chlorochromatii (strain CaD3).